We begin with the raw amino-acid sequence, 429 residues long: Aspartate--tRNA(Asp/Asn) ligase (429 aa).

E167 is an L-aspartate binding site. An aspartate region spans residues 189 to 192 (QLYK). R210 serves as a coordination point for L-aspartate. ATP contacts are provided by residues 210–212 (RAE) and E352. Mg(2+) is bound by residues E352 and S355. S355 and R359 together coordinate L-aspartate. 400-403 (GLAR) contributes to the ATP binding site.

Belongs to the class-II aminoacyl-tRNA synthetase family. Type 2 subfamily. Homodimer. It depends on Mg(2+) as a cofactor.

The protein resides in the cytoplasm. The catalysed reaction is tRNA(Asx) + L-aspartate + ATP = L-aspartyl-tRNA(Asx) + AMP + diphosphate. In terms of biological role, aspartyl-tRNA synthetase with relaxed tRNA specificity since it is able to aspartylate not only its cognate tRNA(Asp) but also tRNA(Asn). Reaction proceeds in two steps: L-aspartate is first activated by ATP to form Asp-AMP and then transferred to the acceptor end of tRNA(Asp/Asn). This chain is Aspartate--tRNA(Asp/Asn) ligase, found in Saccharolobus solfataricus (strain ATCC 35092 / DSM 1617 / JCM 11322 / P2) (Sulfolobus solfataricus).